A 64-amino-acid polypeptide reads, in one-letter code: MRLHHLLLVLFFLVLSAGSGFTQGIRSRRSCHRNKGVCALTRCPRNMRQIGTCFGPPVKCCRKK.

A signal peptide spans 1-20 (MRLHHLLLVLFFLVLSAGSG). A propeptide spanning residues 21–26 (FTQGIR) is cleaved from the precursor. 3 disulfide bridges follow: C31–C60, C38–C53, and C43–C61.

Belongs to the beta-defensin family. Monomer. Homodimer.

Its subcellular location is the secreted. It localises to the membrane. Its function is as follows. Has bactericidal activity. May act as a ligand for C-C chemokine receptor CCR6. Positively regulates the sperm motility and bactericidal activity in a CCR6-dependent manner. Binds to CCR6 and triggers Ca2+ mobilization in the sperm which is important for its motility. This chain is Beta-defensin 1 (DEFB1), found in Capra hircus (Goat).